The primary structure comprises 543 residues: Chaperonin GroEL (543 aa).

ATP contacts are provided by residues 29-32 (TLGP), 86-90 (DGTTT), glycine 413, 476-478 (NAA), and aspartate 492.

This sequence belongs to the chaperonin (HSP60) family. In terms of assembly, forms a cylinder of 14 subunits composed of two heptameric rings stacked back-to-back. Interacts with the co-chaperonin GroES.

It localises to the cytoplasm. The catalysed reaction is ATP + H2O + a folded polypeptide = ADP + phosphate + an unfolded polypeptide.. In terms of biological role, together with its co-chaperonin GroES, plays an essential role in assisting protein folding. The GroEL-GroES system forms a nano-cage that allows encapsulation of the non-native substrate proteins and provides a physical environment optimized to promote and accelerate protein folding. This Streptococcus pyogenes serotype M1 protein is Chaperonin GroEL.